A 573-amino-acid polypeptide reads, in one-letter code: Splicing factor U2af large subunit B (573 aa).

Over residues 1–12 the composition is skewed to acidic residues; sequence MPDYEGNGEDID. The tract at residues 1 to 187 is disordered; that stretch reads MPDYEGNGED…DMAPPTSAML (187 aa). Over residues 38–145 the composition is skewed to basic and acidic residues; that stretch reads SDSKSQHSSR…QREHAKDRES (108 aa). Residues 161–173 are compositionally biased toward basic residues; the sequence is SRSRSRSRSKSKR. 3 RRM domains span residues 239–322, 359–437, and 478–564; these read RRVY…RPSD, DRIF…RANQ, and EVIS…YPEN.

It belongs to the splicing factor SR family. In terms of tissue distribution, expressed in stems, leaves and apical buds.

The protein localises to the nucleus. Necessary for the splicing of pre-mRNA. Binds to the U -enriched regions of plant introns. In Nicotiana plumbaginifolia (Leadwort-leaved tobacco), this protein is Splicing factor U2af large subunit B (U2AF65B).